Reading from the N-terminus, the 554-residue chain is MSKQIVHSDQCRKKIIEGINVVANAVGITLGPKGRCVAIEQSYGPPKITKDGVSVAKAIQLKDKSLNVGAQFVISVASKTADVAGDGTTTATVIADAAVRELNKAEVAGIDIQEVRKGAEKAVEAVIADVRKNSSPVKNEEEIAQVATVSSNGDREIGEKIANAMKQVGQEGVITVEDSKNFNFEVEVVKGMRFDRGYISQYFATNREKMITEFENPYILLLDQKVSTVQPLVPVLEAVAHTGKPLVLIADDVDGEALTALILNNLKGSIKVVAVKAPGFGDRKKEMLEDIAILTNGEVITEQLGIKLEKVNDTSKLGTANRVIVTKDHTTIVHDKNNSDIEKKVNSRCEQIREAIKDTTSDYEKEKLQERLAKLRNGVAVLKVGGATEVEQKERKDRVEDALHATRAAVEEGIVPGGGVALFYASRVLDSLKFDNEDQRVGINIIKKVLEAPVRQIVKNAGGKEDVVVNELSKSNDKNRGFDARTMQYVDMIKAGIVDPTKVVRTALQDAFSVASLVIATSAMITDHEEDNNTNRSGGGVGGGHHGGMGGMDF.

ATP contacts are provided by residues 29–32 (TLGP), Lys-50, 86–90 (DGTTT), Gly-418, and Asp-499. The interval 528–554 (HEEDNNTNRSGGGVGGGHHGGMGGMDF) is disordered. Positions 537-554 (SGGGVGGGHHGGMGGMDF) are enriched in gly residues.

This sequence belongs to the chaperonin (HSP60) family. As to quaternary structure, forms a cylinder of 14 subunits composed of two heptameric rings stacked back-to-back. Interacts with the co-chaperonin GroES.

The protein localises to the cytoplasm. The enzyme catalyses ATP + H2O + a folded polypeptide = ADP + phosphate + an unfolded polypeptide.. Together with its co-chaperonin GroES, plays an essential role in assisting protein folding. The GroEL-GroES system forms a nano-cage that allows encapsulation of the non-native substrate proteins and provides a physical environment optimized to promote and accelerate protein folding. The polypeptide is Chaperonin GroEL (Orientia tsutsugamushi (strain Boryong) (Rickettsia tsutsugamushi)).